The following is a 470-amino-acid chain: Putative multidrug resistance protein MdtD (470 aa).

Over 1–11 (MTELPDNTRWQ) the chain is Periplasmic. Residues 12-32 (LWIVALGFFMQSLDTTIVNTA) traverse the membrane as a helical segment. The Cytoplasmic portion of the chain corresponds to 33 to 48 (LPSMAKSLGESPLHMH). A helical membrane pass occupies residues 49–69 (MVVVSYVLTVAVMLPASGWLA). Residues 70 to 76 (DKIGVRN) are Periplasmic-facing. Residues 77–97 (IFFAAIVLFTLGSLFCALSGT) form a helical membrane-spanning segment. Topologically, residues 98–101 (LNQL) are cytoplasmic. A helical transmembrane segment spans residues 102–124 (VLARVLQGVGGAMMVPVGRLTVM). The Periplasmic segment spans residues 125-137 (KIVPRAQYMAAMT). A helical membrane pass occupies residues 138–158 (FVTLPGQIGPLLGPALGGVLV). Topologically, residues 159–164 (EYASWH) are cytoplasmic. A helical membrane pass occupies residues 165-185 (WIFLINIPVGIVGAMATFMLM). Residues 186–196 (PNYTIETRRFD) lie on the Periplasmic side of the membrane. A helical transmembrane segment spans residues 197-217 (LPGFLLLAIGMAVLTLALDGS). Over 218 to 221 (KSMG) the chain is Cytoplasmic. The helical transmembrane segment at 222–242 (ISPWTLAGLAAGGAAAILLYL) threads the bilayer. At 243 to 262 (LHAKKNSGALFSLRLFCTPT) the chain is on the periplasmic side. Residues 263 to 283 (FSLGLLGSFAGRIGSGMLPFM) form a helical membrane-spanning segment. Topologically, residues 284 to 285 (TP) are cytoplasmic. The chain crosses the membrane as a helical span at residues 286 to 306 (VFLQIGLGFSPFHAGLMMIPM). Over 307 to 341 (VLGSMGMKRIVVQIVNRFGYRRVLVATTLGLALVS) the chain is Periplasmic. The chain crosses the membrane as a helical span at residues 342 to 362 (LLFMSVALLGWYYLLPLVLLL). Residues 363–395 (QGMVNSARFSSMNTLTLKDLPDTLASSGNSLLS) are Cytoplasmic-facing. The chain crosses the membrane as a helical span at residues 396 to 416 (MIMQLSMSIGVTIAGMLLGMF). At 417–430 (GQQHIGIDSSATHH) the chain is on the periplasmic side. A helical transmembrane segment spans residues 431-451 (VFMYTWLCMAVIIALPAIIFA). The Cytoplasmic portion of the chain corresponds to 452-470 (RVPNDTQQNMVISRRKRSL).

It belongs to the major facilitator superfamily. TCR/Tet family.

It localises to the cell inner membrane. In Salmonella paratyphi B (strain ATCC BAA-1250 / SPB7), this protein is Putative multidrug resistance protein MdtD.